Consider the following 276-residue polypeptide: 2,3,4,5-tetrahydropyridine-2,6-dicarboxylate N-succinyltransferase (276 aa).

Substrate is bound by residues R108 and D145.

Belongs to the transferase hexapeptide repeat family. As to quaternary structure, homotrimer.

It is found in the cytoplasm. It catalyses the reaction (S)-2,3,4,5-tetrahydrodipicolinate + succinyl-CoA + H2O = (S)-2-succinylamino-6-oxoheptanedioate + CoA. Its pathway is amino-acid biosynthesis; L-lysine biosynthesis via DAP pathway; LL-2,6-diaminopimelate from (S)-tetrahydrodipicolinate (succinylase route): step 1/3. This chain is 2,3,4,5-tetrahydropyridine-2,6-dicarboxylate N-succinyltransferase, found in Caulobacter vibrioides (strain ATCC 19089 / CIP 103742 / CB 15) (Caulobacter crescentus).